Consider the following 441-residue polypeptide: Mitochondrial distribution and morphology protein 12 (441 aa).

In terms of domain architecture, SMP-LTD spans 1–441; it reads MSIDIDWERA…VYPSFWTFLV (441 aa). The disordered stretch occupies residues 180–289; that stretch reads TPLRAVTRGN…SGTPPRRMRE (110 aa). Composition is skewed to polar residues over residues 226–245 and 253–263; these read SRPSTANTGNTLFSRGSVST and SSQTVLANNPG.

Belongs to the MDM12 family. Component of the ER-mitochondria encounter structure (ERMES) or MDM complex, composed of MMM1, MDM10, MDM12 and MDM34. An MMM1 homodimer associates with one molecule of MDM12 on each side in a pairwise head-to-tail manner, and the SMP-LTD domains of MMM1 and MDM12 generate a continuous hydrophobic tunnel for phospholipid trafficking.

It localises to the mitochondrion outer membrane. The protein localises to the endoplasmic reticulum membrane. Functionally, component of the ERMES/MDM complex, which serves as a molecular tether to connect the endoplasmic reticulum (ER) and mitochondria. Components of this complex are involved in the control of mitochondrial shape and protein biogenesis, and function in nonvesicular lipid trafficking between the ER and mitochondria. MDM12 is required for the interaction of the ER-resident membrane protein MMM1 and the outer mitochondrial membrane-resident beta-barrel protein MDM10. The MDM12-MMM1 subcomplex functions in the major beta-barrel assembly pathway that is responsible for biogenesis of all mitochondrial outer membrane beta-barrel proteins, and acts in a late step after the SAM complex. The MDM10-MDM12-MMM1 subcomplex further acts in the TOM40-specific pathway after the action of the MDM12-MMM1 complex. Essential for establishing and maintaining the structure of mitochondria and maintenance of mtDNA nucleoids. This is Mitochondrial distribution and morphology protein 12 from Paracoccidioides brasiliensis (strain Pb18).